Reading from the N-terminus, the 93-residue chain is Co-chaperonin GroES (93 aa).

It belongs to the GroES chaperonin family. As to quaternary structure, heptamer of 7 subunits arranged in a ring. Interacts with the chaperonin GroEL.

The protein localises to the cytoplasm. In terms of biological role, together with the chaperonin GroEL, plays an essential role in assisting protein folding. The GroEL-GroES system forms a nano-cage that allows encapsulation of the non-native substrate proteins and provides a physical environment optimized to promote and accelerate protein folding. GroES binds to the apical surface of the GroEL ring, thereby capping the opening of the GroEL channel. The chain is Co-chaperonin GroES from Streptococcus anginosus.